The chain runs to 353 residues: Quinolinate synthase (353 aa).

Histidine 47 and serine 68 together coordinate iminosuccinate. Cysteine 113 lines the [4Fe-4S] cluster pocket. Iminosuccinate is bound by residues 139-141 (YAN) and serine 156. Cysteine 200 provides a ligand contact to [4Fe-4S] cluster. Iminosuccinate is bound by residues 226-228 (HPE) and threonine 243. Cysteine 297 provides a ligand contact to [4Fe-4S] cluster.

Belongs to the quinolinate synthase family. Type 1 subfamily. It depends on [4Fe-4S] cluster as a cofactor.

Its subcellular location is the cytoplasm. The catalysed reaction is iminosuccinate + dihydroxyacetone phosphate = quinolinate + phosphate + 2 H2O + H(+). The protein operates within cofactor biosynthesis; NAD(+) biosynthesis; quinolinate from iminoaspartate: step 1/1. Its function is as follows. Catalyzes the condensation of iminoaspartate with dihydroxyacetone phosphate to form quinolinate. This chain is Quinolinate synthase, found in Vibrio campbellii (strain ATCC BAA-1116).